The primary structure comprises 357 residues: Protein RecA (357 aa).

69-76 lines the ATP pocket; it reads GPESSGKT. Residues 337-357 form a disordered region; sequence SANSVAKNNEDDEDEDVEEEE. The span at 346 to 357 shows a compositional bias: acidic residues; it reads EDDEDEDVEEEE.

It belongs to the RecA family.

It is found in the cytoplasm. Can catalyze the hydrolysis of ATP in the presence of single-stranded DNA, the ATP-dependent uptake of single-stranded DNA by duplex DNA, and the ATP-dependent hybridization of homologous single-stranded DNAs. It interacts with LexA causing its activation and leading to its autocatalytic cleavage. In Nostoc sp. (strain PCC 7120 / SAG 25.82 / UTEX 2576), this protein is Protein RecA.